A 485-amino-acid chain; its full sequence is NADH-quinone oxidoreductase subunit N (485 aa).

14 helical membrane passes run Leu-8–Ile-28, Phe-35–Val-55, Phe-75–Leu-95, Phe-105–Leu-125, Ala-127–Phe-147, Tyr-159–Ala-179, Leu-203–Phe-223, Pro-235–Met-255, Leu-271–Gln-291, Ile-303–Leu-323, Val-326–Leu-346, Leu-371–Ile-393, His-406–Leu-426, and Ala-449–Leu-469.

It belongs to the complex I subunit 2 family. In terms of assembly, NDH-1 is composed of 13 different subunits. Subunits NuoA, H, J, K, L, M, N constitute the membrane sector of the complex.

The protein localises to the cell inner membrane. The enzyme catalyses a quinone + NADH + 5 H(+)(in) = a quinol + NAD(+) + 4 H(+)(out). In terms of biological role, NDH-1 shuttles electrons from NADH, via FMN and iron-sulfur (Fe-S) centers, to quinones in the respiratory chain. The immediate electron acceptor for the enzyme in this species is believed to be ubiquinone. Couples the redox reaction to proton translocation (for every two electrons transferred, four hydrogen ions are translocated across the cytoplasmic membrane), and thus conserves the redox energy in a proton gradient. The protein is NADH-quinone oxidoreductase subunit N of Sodalis glossinidius (strain morsitans).